Consider the following 338-residue polypeptide: Phosphate acyltransferase (338 aa).

This sequence belongs to the PlsX family. Homodimer. Probably interacts with PlsY.

It localises to the cytoplasm. The enzyme catalyses a fatty acyl-[ACP] + phosphate = an acyl phosphate + holo-[ACP]. The protein operates within lipid metabolism; phospholipid metabolism. Catalyzes the reversible formation of acyl-phosphate (acyl-PO(4)) from acyl-[acyl-carrier-protein] (acyl-ACP). This enzyme utilizes acyl-ACP as fatty acyl donor, but not acyl-CoA. In Gloeobacter violaceus (strain ATCC 29082 / PCC 7421), this protein is Phosphate acyltransferase.